We begin with the raw amino-acid sequence, 130 residues long: Small ribosomal subunit protein uS9 (130 aa).

Belongs to the universal ribosomal protein uS9 family.

The polypeptide is Small ribosomal subunit protein uS9 (Geotalea uraniireducens (strain Rf4) (Geobacter uraniireducens)).